The chain runs to 203 residues: ER membrane protein complex subunit 8/9 homolog (203 aa).

The MPN domain occupies 4 to 140 (YKVSERAYAK…IQVFNCPGDS (137 aa)).

This sequence belongs to the EMC8/EMC9 family. In terms of assembly, component of the ER membrane protein complex (EMC).

The protein resides in the endoplasmic reticulum membrane. Part of the endoplasmic reticulum membrane protein complex (EMC) that enables the energy-independent insertion into endoplasmic reticulum membranes of newly synthesized multi-pass membrane proteins like rhodopsins. The polypeptide is ER membrane protein complex subunit 8/9 homolog (Drosophila melanogaster (Fruit fly)).